Consider the following 57-residue polypeptide: Zinc finger protein MJ0458.1 (57 aa).

Short sequence motifs (c(P)XCG motif) lie at residues C8–N12, C26–G30, C37–R41, and C49–G53. Zn(2+) is bound by residues C26 and C29. Zn(2+) contacts are provided by C49 and C52.

In terms of assembly, monomer in solution.

Functionally, zinc-binding protein that binds only one zinc ion. In Methanocaldococcus jannaschii (strain ATCC 43067 / DSM 2661 / JAL-1 / JCM 10045 / NBRC 100440) (Methanococcus jannaschii), this protein is Zinc finger protein MJ0458.1.